Reading from the N-terminus, the 487-residue chain is Protein SMG9 (487 aa).

2 disordered regions span residues 30–83 (EDAA…PPAL) and 136–164 (RDKGSCSGGAGTAGTSAGAPNALQELQPP). Positions 42–70 (LKKDRDREQETWDRERDKDRKLERDREAE) are enriched in basic and acidic residues.

This sequence belongs to the SMG9 family.

In terms of biological role, involved in nonsense-mediated decay (NMD) of mRNAs containing premature stop codons. Probable component of kinase complex containing nonC and recruited to stalled ribosomes. The chain is Protein SMG9 from Drosophila melanogaster (Fruit fly).